Here is a 92-residue protein sequence, read N- to C-terminus: MSRSLKKGPFVADHLLTKVENLNEKGEKQVIKTWSRASTIIPQMIGHTIAVHNGRQHVPVYVSEQMVGHKLGEFAPTRTFKSHSKGDKKARM.

Belongs to the universal ribosomal protein uS19 family.

Its function is as follows. Protein S19 forms a complex with S13 that binds strongly to the 16S ribosomal RNA. This chain is Small ribosomal subunit protein uS19, found in Acaryochloris marina (strain MBIC 11017).